A 597-amino-acid chain; its full sequence is Proteasome-associated ATPase (597 aa).

Basic and acidic residues predominate over residues 1-12; the sequence is MQHDRPGSRPEE. The disordered stretch occupies residues 1-22; it reads MQHDRPGSRPEEGGEQQIGGDA. The stretch at 21-97 forms a coiled coil; sequence DAELNSQIRL…REEVDRLAQP (77 aa). 284–289 is a binding site for ATP; it reads GCGKTL. The segment at 596–597 is docks into pockets in the proteasome alpha-ring; the sequence is YL.

This sequence belongs to the AAA ATPase family. As to quaternary structure, homohexamer. Assembles into a hexameric ring structure that caps the 20S proteasome core. Strongly interacts with the prokaryotic ubiquitin-like protein Pup through a hydrophobic interface; the interacting region of ARC lies in its N-terminal coiled-coil domain. There is one Pup binding site per ARC hexamer ring. Upon ATP-binding, the C-terminus of ARC interacts with the alpha-rings of the proteasome core, possibly by binding to the intersubunit pockets.

It functions in the pathway protein degradation; proteasomal Pup-dependent pathway. In terms of biological role, ATPase which is responsible for recognizing, binding, unfolding and translocation of pupylated proteins into the bacterial 20S proteasome core particle. May be essential for opening the gate of the 20S proteasome via an interaction with its C-terminus, thereby allowing substrate entry and access to the site of proteolysis. Thus, the C-termini of the proteasomal ATPase may function like a 'key in a lock' to induce gate opening and therefore regulate proteolysis. The protein is Proteasome-associated ATPase of Saccharopolyspora erythraea (strain ATCC 11635 / DSM 40517 / JCM 4748 / NBRC 13426 / NCIMB 8594 / NRRL 2338).